A 397-amino-acid chain; its full sequence is Alpha-lytic protease (397 aa).

The first 24 residues, 1–24 (MYVSNHRSRRVARVSVSCLVAALA), serve as a signal peptide directing secretion. Residues 25-199 (AMSCGAALAA…ESSPGKLQTT (175 aa)) constitute a propeptide that is removed on maturation. C216 and C236 are oxidised to a cystine. Residues H235 and D262 each act as charge relay system in the active site. Cystine bridges form between C300–C310 and C336–C369. The Charge relay system role is filled by S342.

Belongs to the peptidase S1 family.

The enzyme catalyses Preferential cleavage: Ala-|-Xaa, Val-|-Xaa in bacterial cell walls, elastin and other proteins.. This chain is Alpha-lytic protease (alpha-LP), found in Lysobacter enzymogenes.